Here is a 454-residue protein sequence, read N- to C-terminus: tRNA modification GTPase MnmE (454 aa).

3 residues coordinate (6S)-5-formyl-5,6,7,8-tetrahydrofolate: R26, E84, and K123. Residues 219 to 378 enclose the TrmE-type G domain; it reads GLQVVIAGKP…LVDAITAHAG (160 aa). Residue N229 participates in K(+) binding. GTP contacts are provided by residues 229–234, 248–254, and 273–276; these read NAGKSS, TDIAGTT, and DTAG. S233 provides a ligand contact to Mg(2+). Residues T248, I250, and T253 each coordinate K(+). Mg(2+) is bound at residue T254. A (6S)-5-formyl-5,6,7,8-tetrahydrofolate-binding site is contributed by K454.

This sequence belongs to the TRAFAC class TrmE-Era-EngA-EngB-Septin-like GTPase superfamily. TrmE GTPase family. As to quaternary structure, homodimer. Heterotetramer of two MnmE and two MnmG subunits. Requires K(+) as cofactor.

It is found in the cytoplasm. Its function is as follows. Exhibits a very high intrinsic GTPase hydrolysis rate. Involved in the addition of a carboxymethylaminomethyl (cmnm) group at the wobble position (U34) of certain tRNAs, forming tRNA-cmnm(5)s(2)U34. The sequence is that of tRNA modification GTPase MnmE from Acinetobacter baumannii (strain AYE).